The following is a 203-amino-acid chain: ATP-dependent Clp protease proteolytic subunit 2 (203 aa).

Catalysis depends on Ser100, which acts as the Nucleophile. The active site involves His125.

The protein belongs to the peptidase S14 family. As to quaternary structure, fourteen ClpP subunits assemble into 2 heptameric rings which stack back to back to give a disk-like structure with a central cavity, resembling the structure of eukaryotic proteasomes.

It is found in the cytoplasm. It catalyses the reaction Hydrolysis of proteins to small peptides in the presence of ATP and magnesium. alpha-casein is the usual test substrate. In the absence of ATP, only oligopeptides shorter than five residues are hydrolyzed (such as succinyl-Leu-Tyr-|-NHMec, and Leu-Tyr-Leu-|-Tyr-Trp, in which cleavage of the -Tyr-|-Leu- and -Tyr-|-Trp bonds also occurs).. Cleaves peptides in various proteins in a process that requires ATP hydrolysis. Has a chymotrypsin-like activity. Plays a major role in the degradation of misfolded proteins. The protein is ATP-dependent Clp protease proteolytic subunit 2 of Thermobifida fusca (strain YX).